The primary structure comprises 352 residues: Cellular tumor antigen p53 (352 aa).

The transcription activation (acidic) stretch occupies residues 1 to 48 (MDPVPDLPESQGSFQELWETVSYPPLETLSLPTVNEPTGSWVATGDMF). Residues 87 to 273 (DYPGSYELEL…KTEEESRQKT (187 aa)) mediate DNA binding. Residues Cys-161, His-164, Cys-220, and Cys-224 each contribute to the Zn(2+) site. The segment at 254–261 (RICACPGR) is interaction with DNA. Positions 262–271 (DRKTEEESRQ) are enriched in basic and acidic residues. The disordered stretch occupies residues 262 to 303 (DRKTEEESRQKTQPKKRKVTPNTSSSKRKKSHSSGEEEDNRE). Positions 276-291 (KKRKVTPNTSSSKRKK) match the Bipartite nuclear localization signal motif. The segment at 302-331 (REVFHFEVYGRERYEFLKKINDGLELLEKE) is oligomerization. Residues 316–327 (EFLKKINDGLEL) carry the Nuclear export signal motif. The segment at 330–352 (KESKSKNKDSGMVPSSGKKLKSN) is disordered. Residues 334 to 350 (SKNKDSGMVPSSGKKLK) are basic (repression of DNA-binding). The residue at position 351 (Ser-351) is a Phosphoserine.

Belongs to the p53 family. As to quaternary structure, binds DNA as a homotetramer. Zn(2+) is required as a cofactor.

It localises to the cytoplasm. The protein resides in the nucleus. Multifunctional transcription factor that induces cell cycle arrest, DNA repair or apoptosis upon binding to its target DNA sequence. Acts as a tumor suppressor in many tumor types; induces growth arrest or apoptosis depending on the physiological circumstances and cell type. Negatively regulates cell division by controlling expression of a set of genes required for this process. One of the activated genes is an inhibitor of cyclin-dependent kinases. Apoptosis induction seems to be mediated either by stimulation of BAX and FAS antigen expression, or by repression of Bcl-2 expression. The protein is Cellular tumor antigen p53 (tp53) of Oryzias latipes (Japanese rice fish).